A 1291-amino-acid polypeptide reads, in one-letter code: Capping protein-inhibiting regulator of actin dynamics (1291 aa).

Phosphoserine occurs at positions 7 and 28. 6 disordered regions span residues 48-71 (KFGQ…SSEE), 84-137 (QQDI…AGTI), 159-221 (HKLA…HEEK), 234-253 (KCKR…EQRR), 267-663 (QELL…ASHA), and 701-1238 (LGLS…TSVT). Ser-132 is modified (phosphoserine). The segment covering 159 to 176 (HKLAVKPKNQRVSRKHRW) has biased composition (basic residues). Residues 184-199 (EPGSFESQSSLDQNGQ) show a composition bias toward polar residues. The segment covering 201 to 221 (GEDKHIWHGEEPEPLESHEEK) has biased composition (basic and acidic residues). Residues 270 to 291 (LEEEEEGEEEEEVKEEGEEGEE) show a composition bias toward acidic residues. 3 stretches are compositionally biased toward basic and acidic residues: residues 302–318 (PPEE…RCTE), 326–461 (DPAR…EDAK), and 470–483 (EAKR…KETP). The tract at residues 324-560 (ADDPARLEAE…DLDAHCGGVD (237 aa)) is required for interaction with actin-capping proteins. A Phosphothreonine modification is found at Thr-482. 2 positions are modified to phosphoserine: Ser-493 and Ser-510. 2 stretches are compositionally biased toward basic and acidic residues: residues 506–527 (ADQR…REDL) and 534–543 (EIAEEPRGEG). Positions 580-593 (EGTPAPEENEATAA) are enriched in low complexity. Over residues 594-612 (DIDRKVEELRWQEVDERQT) the composition is skewed to basic and acidic residues. Ser-636 carries the post-translational modification Phosphoserine. Thr-639 carries the phosphothreonine modification. A compositionally biased stretch (basic and acidic residues) spans 749–778 (KNSEGDQRGDREPARAGDEPVPRARCDSRG). A Phosphoserine modification is found at Ser-867. Residues 875–888 (TESTTTLDSETTSD) are compositionally biased toward low complexity. The segment covering 969 to 983 (QERKPALSPRKDSAE) has biased composition (basic and acidic residues). Thr-1033 bears the Phosphothreonine mark. Ser-1037 bears the Phosphoserine mark. Residues 1056 to 1070 (GKLDSEPSETAKESS) are compositionally biased toward basic and acidic residues. Ser-1076 bears the Phosphoserine mark. Basic and acidic residues-rich tracts occupy residues 1081–1098 (EELK…EKKP), 1117–1141 (TGRK…EKVE), and 1157–1182 (GFRE…KLSK). Polar residues-rich tracts occupy residues 1183 to 1197 (ETVS…SRAS) and 1229 to 1238 (KSNTLPTSVT).

As to quaternary structure, directly interacts with actin-capping proteins CAPZA1, CAPZA2 and CAPZB; this interaction decreases the binding of capping proteins to actin. As to expression, expressed in the small intestine (at protein level).

It is found in the cytoplasm. The protein localises to the cytosol. Involved in epithelial cell integrity by acting on the dynamics of the actin cytoskeleton. Positively regulates the actin polymerization, by inhibiting the interaction of actin-capping proteins with actin. The chain is Capping protein-inhibiting regulator of actin dynamics from Mus musculus (Mouse).